We begin with the raw amino-acid sequence, 257 residues long: Receptor expression-enhancing protein 4 (257 aa).

2 helical membrane passes run 1–21 (MVSW…YPAY) and 42–62 (WIVF…ISWF). 2 positions are modified to phosphoserine: Ser-152 and Ser-194. Residues 177–257 (VPRRRPPIGY…KKAMPSDMDS (81 aa)) form a disordered region. Phosphothreonine is present on Thr-196. Phosphoserine is present on residues Ser-202 and Ser-253.

It belongs to the DP1 family.

The protein localises to the endoplasmic reticulum membrane. Its function is as follows. Microtubule-binding protein required to ensure proper cell division and nuclear envelope reassembly by sequestering the endoplasmic reticulum away from chromosomes during mitosis. Probably acts by clearing the endoplasmic reticulum membrane from metaphase chromosomes. The chain is Receptor expression-enhancing protein 4 (Reep4) from Mus musculus (Mouse).